We begin with the raw amino-acid sequence, 465 residues long: Gamma-aminobutyric acid receptor subunit gamma-1 (465 aa).

The first 20 residues, 1-20, serve as a signal peptide directing secretion; the sequence is MGSGKVFLFSPSLLWSQTRG. At 21–273 the chain is on the extracellular side; sequence VRLIFLLLTL…FDLSRRMGYF (253 aa). Asn-50 and Asn-127 each carry an N-linked (GlcNAc...) asparagine glycan. A disulfide bridge connects residues Cys-188 and Cys-202. Asn-245 carries an N-linked (GlcNAc...) asparagine glycan. The chain crosses the membrane as a helical span at residues 274 to 294; sequence TIQTYIPCILTVVLSWVSFWI. Topologically, residues 295 to 300 are cytoplasmic; sequence NKDAVP. The chain crosses the membrane as a helical span at residues 301–320; it reads ARTSLGITTVLTMTTLSTIA. The Extracellular portion of the chain corresponds to 321-328; sequence RKSLPKVS. Residues 329 to 349 form a helical membrane-spanning segment; the sequence is YVTAMDLFVSVCFIFVFAALM. Topologically, residues 350–444 are cytoplasmic; it reads EYGTLHYFTS…RIAKIDSYSR (95 aa). A helical membrane pass occupies residues 445–465; that stretch reads IFFPTAFALFNLVYWVGYLYL.

This sequence belongs to the ligand-gated ion channel (TC 1.A.9) family. Gamma-aminobutyric acid receptor (TC 1.A.9.5) subfamily. GABRG1 sub-subfamily. In terms of assembly, heteropentamer, formed by a combination of alpha (GABRA1-6), beta (GABRB1-3), gamma (GABRG1-3), delta (GABRD), epsilon (GABRE), rho (GABRR1-3), pi (GABRP) and theta (GABRQ) chains, each subunit exhibiting distinct physiological and pharmacological properties. In terms of processing, may be palmitoylated. As to expression, expressed in brain.

It localises to the postsynaptic cell membrane. The protein localises to the cell membrane. It catalyses the reaction chloride(in) = chloride(out). Gamma subunit of the heteropentameric ligand-gated chloride channel gated by gamma-aminobutyric acid (GABA), a major inhibitory neurotransmitter in the brain. GABA-gated chloride channels, also named GABA(A) receptors (GABAAR), consist of five subunits arranged around a central pore and contain GABA active binding site(s) located at the alpha and beta subunit interface(s). When activated by GABA, GABAARs selectively allow the flow of chloride anions across the cell membrane down their electrochemical gradient. Chloride influx into the postsynaptic neuron following GABAAR opening decreases the neuron ability to generate a new action potential, thereby reducing nerve transmission. The protein is Gamma-aminobutyric acid receptor subunit gamma-1 of Rattus norvegicus (Rat).